The chain runs to 853 residues: DNA mismatch repair protein MutS (853 aa).

614–621 (GPNMGGKS) is an ATP binding site.

The protein belongs to the DNA mismatch repair MutS family.

Functionally, this protein is involved in the repair of mismatches in DNA. It is possible that it carries out the mismatch recognition step. This protein has a weak ATPase activity. The sequence is that of DNA mismatch repair protein MutS from Citrobacter koseri (strain ATCC BAA-895 / CDC 4225-83 / SGSC4696).